The following is a 378-amino-acid chain: UPF0284 protein MK0224 (378 aa).

The protein belongs to the UPF0284 family.

In Methanopyrus kandleri (strain AV19 / DSM 6324 / JCM 9639 / NBRC 100938), this protein is UPF0284 protein MK0224.